Consider the following 478-residue polypeptide: Signal recognition particle receptor FtsY (478 aa).

2 stretches are compositionally biased toward basic and acidic residues: residues 14–33 (KDKAETEERPQEDAALERGN) and 45–56 (AEAHDAVDKDPV). Residues 14 to 94 (KDKAETEERP…DAPLLPGAEL (81 aa)) are disordered. The span at 71 to 86 (EAVDVAPAEDDEEEDA) shows a compositional bias: acidic residues. Residues 283–290 (GVNGTGKT), 365–369 (DTAGR), and 429–432 (TKLD) each bind GTP.

Belongs to the GTP-binding SRP family. FtsY subfamily. Part of the signal recognition particle protein translocation system, which is composed of SRP and FtsY. SRP is a ribonucleoprotein composed of Ffh and a 4.5S RNA molecule.

Its subcellular location is the cell inner membrane. It localises to the cytoplasm. It carries out the reaction GTP + H2O = GDP + phosphate + H(+). Involved in targeting and insertion of nascent membrane proteins into the cytoplasmic membrane. Acts as a receptor for the complex formed by the signal recognition particle (SRP) and the ribosome-nascent chain (RNC). Interaction with SRP-RNC leads to the transfer of the RNC complex to the Sec translocase for insertion into the membrane, the hydrolysis of GTP by both Ffh and FtsY, and the dissociation of the SRP-FtsY complex into the individual components. This is Signal recognition particle receptor FtsY from Agrobacterium fabrum (strain C58 / ATCC 33970) (Agrobacterium tumefaciens (strain C58)).